The following is a 273-amino-acid chain: Zinc finger protein 80 (273 aa).

2 consecutive C2H2-type zinc fingers follow at residues 49–71 (YKCK…QQIH) and 77–99 (YECQ…MRIH). The C2H2-type 3; atypical zinc finger occupies 105–127 (CKCVECGKVFNRRSHLLCYRQIH). 4 C2H2-type zinc fingers span residues 133-155 (YECS…RVTH), 161-183 (FGCK…MKIH), 189-211 (CKCS…SMTH), and 217-239 (YECK…TRSH).

Belongs to the krueppel C2H2-type zinc-finger protein family.

Its subcellular location is the nucleus. Its function is as follows. May be involved in transcriptional regulation. The polypeptide is Zinc finger protein 80 (ZNF80) (Homo sapiens (Human)).